A 504-amino-acid polypeptide reads, in one-letter code: Glycerol kinase (504 aa).

Thr-14 is a binding site for ADP. ATP contacts are provided by Thr-14, Thr-15, and Ser-16. Thr-14 contributes to the sn-glycerol 3-phosphate binding site. Arg-18 contacts ADP. Residues Arg-84, Glu-85, Tyr-136, and Asp-246 each contribute to the sn-glycerol 3-phosphate site. Positions 84, 85, 136, 246, and 247 each coordinate glycerol. The ADP site is built by Thr-268 and Gly-311. Residues Thr-268, Gly-311, Gln-315, and Gly-412 each coordinate ATP. Residues Gly-412 and Asn-416 each contribute to the ADP site.

It belongs to the FGGY kinase family.

It catalyses the reaction glycerol + ATP = sn-glycerol 3-phosphate + ADP + H(+). It functions in the pathway polyol metabolism; glycerol degradation via glycerol kinase pathway; sn-glycerol 3-phosphate from glycerol: step 1/1. Its activity is regulated as follows. Inhibited by fructose 1,6-bisphosphate (FBP). In terms of biological role, key enzyme in the regulation of glycerol uptake and metabolism. Catalyzes the phosphorylation of glycerol to yield sn-glycerol 3-phosphate. In Aliivibrio fischeri (strain MJ11) (Vibrio fischeri), this protein is Glycerol kinase.